The primary structure comprises 303 residues: Recombination-associated protein RdgC (303 aa).

The protein belongs to the RdgC family.

Its subcellular location is the cytoplasm. It is found in the nucleoid. Its function is as follows. May be involved in recombination. The chain is Recombination-associated protein RdgC from Shewanella piezotolerans (strain WP3 / JCM 13877).